A 180-amino-acid chain; its full sequence is Chromatin structure-remodeling complex protein RSC14 (180 aa).

Interacts with STH1, RSC3 and ARP9. Component of the two forms of the RSC complex composed of at least either RSC1 or RSC2, and ARP7, ARP9, LDB7, NPL6, RSC3, RSC30, RSC4, RSC58, RSC6, RSC8, RSC9, SFH1, STH1, HTL1 and probably RTT102. The complexes interact with histone and histone variant components of centromeric chromatin. Component of a fungal-specific module (HTL1-LDB7-NPL6-RSC3-RSC30) within the RSC complex.

The protein localises to the nucleus. Its function is as follows. Component of the chromatin structure-remodeling complex (RSC), which is involved in transcription regulation and nucleosome positioning. RSC is responsible for the transfer of a histone octamer from a nucleosome core particle to naked DNA. The reaction requires ATP and involves an activated RSC-nucleosome intermediate. Remodeling reaction also involves DNA translocation, DNA twist and conformational change. As a reconfigurer of centromeric and flanking nucleosomes, RSC complex is required both for proper kinetochore function in chromosome segregation and, via a PKC1-dependent signaling pathway, for organization of the cellular cytoskeleton. Together with HTL1, NPL6, RSC3, RSC30 components, defines a fungal-specific module within the RSC complex that plays a role in many cellular functions including the maintenance of cell wall integrity. May be involved in the transfer of mannosylphosphate (MP) groups into N-linked oligosaccharides. This chain is Chromatin structure-remodeling complex protein RSC14 (LDB7), found in Saccharomyces cerevisiae (strain ATCC 204508 / S288c) (Baker's yeast).